The following is a 58-amino-acid chain: Large ribosomal subunit protein uL30 (58 aa).

This sequence belongs to the universal ribosomal protein uL30 family. Part of the 50S ribosomal subunit.

The polypeptide is Large ribosomal subunit protein uL30 (Bacteroides fragilis (strain ATCC 25285 / DSM 2151 / CCUG 4856 / JCM 11019 / LMG 10263 / NCTC 9343 / Onslow / VPI 2553 / EN-2)).